Here is a 917-residue protein sequence, read N- to C-terminus: Major intrinsically disordered Notch2-binding receptor 1 (917 aa).

At 1–892 (MEANQEASLF…AEFRRAKVCK (892 aa)) the chain is on the cytoplasmic side. Disordered stretches follow at residues 337 to 367 (STYF…WPAK), 389 to 410 (SEEK…GPDR), 457 to 476 (DKSI…SVGT), 568 to 588 (ITNG…NVHH), 652 to 679 (SEAP…LENS), 706 to 727 (TRPS…IASI), and 746 to 783 (NEEE…LPKQ). The segment covering 460–476 (ISCTSGQHSSDTSSVGT) has biased composition (polar residues). The span at 576–588 (KGDKCNRPENVHH) shows a compositional bias: basic and acidic residues. Serine 712 is subject to Phosphoserine. The chain crosses the membrane as a helical span at residues 893 to 913 (IAALITAAACTVILVIVVPIC). Residues 914-917 (TMKS) are Extracellular-facing.

Belongs to the MINAR family. In terms of assembly, interacts with NOTCH2; this interaction increases MINAR1 stability. Interacts (via N-terminus) with DEPTOR (via PDZ domain); this interaction may stabilize DEPTOR protein by impairing its ubiquitination.

It localises to the cell membrane. Functionally, intrinsically disordered protein which may negatively regulate mTOR signaling pathway by stabilizing the mTOR complex component DEPTOR. Negatively regulates angiogenesis. Negatively regulates cell growth. Negatively regulates neurite outgrowth in hippocampal neurons. This is Major intrinsically disordered Notch2-binding receptor 1 (Minar1) from Rattus norvegicus (Rat).